Consider the following 280-residue polypeptide: Fructose-1,6-bisphosphatase class 1 (280 aa).

Glu-64, Asp-83, Leu-85, and Asp-86 together coordinate Mg(2+). Residues 86–89 (DGSS), Tyr-189, and Lys-220 contribute to the substrate site. Glu-226 contributes to the Mg(2+) binding site.

This sequence belongs to the FBPase class 1 family. As to quaternary structure, homotetramer. Mg(2+) is required as a cofactor.

The protein localises to the cytoplasm. The enzyme catalyses beta-D-fructose 1,6-bisphosphate + H2O = beta-D-fructose 6-phosphate + phosphate. Its pathway is carbohydrate biosynthesis; gluconeogenesis. The chain is Fructose-1,6-bisphosphatase class 1 from Campylobacter jejuni subsp. jejuni serotype O:6 (strain 81116 / NCTC 11828).